The sequence spans 359 residues: Methyltransferase fsa4 (359 aa).

S-adenosyl-L-methionine contacts are provided by residues 198 to 199, Asp224, 248 to 249, Arg264, and Arg265; these read GG and SF.

The protein belongs to the class I-like SAM-binding methyltransferase superfamily. Cation-independent O-methyltransferase family.

It participates in mycotoxin biosynthesis. In terms of biological role, methyltransferase; part of the gene cluster that mediates the biosynthesis of HIV-1 integrase inhibitor equisetin and of fusarisetin A, both trans-fused decalin-containing tetramic acids showing also antimicrobial activity. The PKS module of fsa1 together with the enoylreductase fsa3 catalyze the formation of the polyketide unit which is then conjugated to L-serine by the condensation domain of the fsa1 NRPS module. Activity of the Dieckmann cyclase domain (RED) results in release of the Dieckmann product intermediate. Diels-Alderase fsa2 is involved in endo-selective Diels-Alder cycloaddition to form the decalin ring, leading to the production of N-desmethylequisetin also called trichosetin. Subsequent N-methylation is carried out by fsa4 to give equisetin. The enzymatic gene responsible for the conversion of equisetin to fusarisetin A has not been identified yet and is probably located outside of the fsa cluster. This chain is Methyltransferase fsa4, found in Fusarium sp. (strain FN080326).